Reading from the N-terminus, the 347-residue chain is GMP reductase (347 aa).

108 to 131 (TDFIKLSEILAKSEDLNFICIDIA) is a binding site for NADP(+). The K(+) site is built by G181 and G183. The active-site Thioimidate intermediate is the C186. 216-239 (IIGDGGCSCAGDVAKAFGGGADFV) serves as a coordination point for NADP(+).

It belongs to the IMPDH/GMPR family. GuaC type 1 subfamily. Homotetramer.

The catalysed reaction is IMP + NH4(+) + NADP(+) = GMP + NADPH + 2 H(+). Catalyzes the irreversible NADPH-dependent deamination of GMP to IMP. It functions in the conversion of nucleobase, nucleoside and nucleotide derivatives of G to A nucleotides, and in maintaining the intracellular balance of A and G nucleotides. The chain is GMP reductase from Shewanella pealeana (strain ATCC 700345 / ANG-SQ1).